A 214-amino-acid chain; its full sequence is Pyridoxine/pyridoxamine 5'-phosphate oxidase (214 aa).

Substrate contacts are provided by residues 9–12 (RKNY) and Lys-67. FMN contacts are provided by residues 62-67 (RMVLLK), 77-78 (YT), Lys-84, and Gln-106. Residues Tyr-124, Arg-128, and Ser-132 each coordinate substrate. FMN-binding positions include 141–142 (QS) and Trp-186. Residue 192 to 194 (RLH) participates in substrate binding. Residue Arg-196 participates in FMN binding.

This sequence belongs to the pyridoxamine 5'-phosphate oxidase family. As to quaternary structure, homodimer. FMN is required as a cofactor.

It carries out the reaction pyridoxamine 5'-phosphate + O2 + H2O = pyridoxal 5'-phosphate + H2O2 + NH4(+). The catalysed reaction is pyridoxine 5'-phosphate + O2 = pyridoxal 5'-phosphate + H2O2. It participates in cofactor metabolism; pyridoxal 5'-phosphate salvage; pyridoxal 5'-phosphate from pyridoxamine 5'-phosphate: step 1/1. It functions in the pathway cofactor metabolism; pyridoxal 5'-phosphate salvage; pyridoxal 5'-phosphate from pyridoxine 5'-phosphate: step 1/1. Functionally, catalyzes the oxidation of either pyridoxine 5'-phosphate (PNP) or pyridoxamine 5'-phosphate (PMP) into pyridoxal 5'-phosphate (PLP). The sequence is that of Pyridoxine/pyridoxamine 5'-phosphate oxidase from Gloeothece citriformis (strain PCC 7424) (Cyanothece sp. (strain PCC 7424)).